A 248-amino-acid chain; its full sequence is 2,3-bisphosphoglycerate-dependent phosphoglycerate mutase (248 aa).

Residues 8–15 (RHGESTWN), 21–22 (TG), R60, 87–90 (ERHY), K98, and 114–115 (RR) each bind substrate. H9 functions as the Tele-phosphohistidine intermediate in the catalytic mechanism. Catalysis depends on E87, which acts as the Proton donor/acceptor. The tract at residues 117 to 137 (YDTPPPALEPTDPRASYDDPR) is disordered. A compositionally biased stretch (basic and acidic residues) spans 127 to 137 (TDPRASYDDPR). 183-184 (GN) lines the substrate pocket.

The protein belongs to the phosphoglycerate mutase family. BPG-dependent PGAM subfamily. As to quaternary structure, homodimer.

The enzyme catalyses (2R)-2-phosphoglycerate = (2R)-3-phosphoglycerate. It functions in the pathway carbohydrate degradation; glycolysis; pyruvate from D-glyceraldehyde 3-phosphate: step 3/5. Functionally, catalyzes the interconversion of 2-phosphoglycerate and 3-phosphoglycerate. In Cupriavidus taiwanensis (strain DSM 17343 / BCRC 17206 / CCUG 44338 / CIP 107171 / LMG 19424 / R1) (Ralstonia taiwanensis (strain LMG 19424)), this protein is 2,3-bisphosphoglycerate-dependent phosphoglycerate mutase.